Reading from the N-terminus, the 448-residue chain is Probable glycine dehydrogenase (decarboxylating) subunit 1 (448 aa).

It belongs to the GcvP family. N-terminal subunit subfamily. In terms of assembly, the glycine cleavage system is composed of four proteins: P, T, L and H. In this organism, the P 'protein' is a heterodimer of two subunits.

The catalysed reaction is N(6)-[(R)-lipoyl]-L-lysyl-[glycine-cleavage complex H protein] + glycine + H(+) = N(6)-[(R)-S(8)-aminomethyldihydrolipoyl]-L-lysyl-[glycine-cleavage complex H protein] + CO2. Its function is as follows. The glycine cleavage system catalyzes the degradation of glycine. The P protein binds the alpha-amino group of glycine through its pyridoxal phosphate cofactor; CO(2) is released and the remaining methylamine moiety is then transferred to the lipoamide cofactor of the H protein. The polypeptide is Probable glycine dehydrogenase (decarboxylating) subunit 1 (Listeria monocytogenes serotype 4b (strain CLIP80459)).